The sequence spans 566 residues: Lactase-like protein (566 aa).

Positions 1 to 20 (MKPVWVIILGWILLVPRVGT) are cleaved as a signal peptide. Topologically, residues 21 to 540 (AWRGPPEEAS…LLRHMHVASE (520 aa)) are extracellular. Asparagine 170 and asparagine 244 each carry an N-linked (GlcNAc...) asparagine glycan. The chain crosses the membrane as a helical span at residues 541–561 (IVVPTVCALSILTAALMLTLL). Topologically, residues 562-566 (LRRRG) are cytoplasmic.

This sequence belongs to the glycosyl hydrolase 1 family. Klotho subfamily. As to quaternary structure, may form dimers. In terms of tissue distribution, strongly expressed in the lens of the eye, where it localizes to the equatorial epithelium and outer layers of newly extending fiber cells (at protein level). May also be expressed in kidney and skin. However, another study suggests that expression is specific to eye and is minimal in other tissues.

The protein localises to the endoplasmic reticulum membrane. Functionally, plays a role in formation of the lens suture in the eye, which is important for normal optical properties of the lens. The sequence is that of Lactase-like protein (Lctl) from Mus musculus (Mouse).